The primary structure comprises 704 residues: Polyribonucleotide nucleotidyltransferase (704 aa).

Residues D487 and D493 each contribute to the Mg(2+) site. The KH domain maps to 554 to 613 (PRLLTIKIHPDKIREVIGKGGSTIQAITKETGTQIDIQDDGTIIIASVNAIAAQAAKSRI). The region spanning 623–691 (GRIYEGKVAK…KQGRIRLSIK (69 aa)) is the S1 motif domain.

Belongs to the polyribonucleotide nucleotidyltransferase family. In terms of assembly, component of the RNA degradosome, which is a multiprotein complex involved in RNA processing and mRNA degradation. Mg(2+) is required as a cofactor.

The protein localises to the cytoplasm. The catalysed reaction is RNA(n+1) + phosphate = RNA(n) + a ribonucleoside 5'-diphosphate. Functionally, involved in mRNA degradation. Catalyzes the phosphorolysis of single-stranded polyribonucleotides processively in the 3'- to 5'-direction. In Xanthomonas oryzae pv. oryzae (strain MAFF 311018), this protein is Polyribonucleotide nucleotidyltransferase.